Consider the following 180-residue polypeptide: Ribulose bisphosphate carboxylase small subunit, chloroplastic (180 aa).

The N-terminal 56 residues, 1–56 (MALISSAAVTTVNRASSAQANLVAPFTGLKSSAGFPVTKKTNNDITSIASNGGRVN), are a transit peptide targeting the chloroplast.

The protein belongs to the RuBisCO small chain family. Heterohexadecamer of 8 large and 8 small subunits.

It is found in the plastid. The protein localises to the chloroplast. Functionally, ruBisCO catalyzes two reactions: the carboxylation of D-ribulose 1,5-bisphosphate, the primary event in carbon dioxide fixation, as well as the oxidative fragmentation of the pentose substrate. Both reactions occur simultaneously and in competition at the same active site. Although the small subunit is not catalytic it is essential for maximal activity. In Medicago sativa (Alfalfa), this protein is Ribulose bisphosphate carboxylase small subunit, chloroplastic.